Here is a 91-residue protein sequence, read N- to C-terminus: YcgL domain-containing protein ETA_15380 (91 aa).

In terms of domain architecture, YcgL spans 1-85 (MFCVIYRSPQ…PLESLLKIHL (85 aa)).

The sequence is that of YcgL domain-containing protein ETA_15380 from Erwinia tasmaniensis (strain DSM 17950 / CFBP 7177 / CIP 109463 / NCPPB 4357 / Et1/99).